The sequence spans 494 residues: Lysine--tRNA ligase (494 aa).

Mg(2+)-binding residues include Glu-399 and Glu-406.

The protein belongs to the class-II aminoacyl-tRNA synthetase family. Mg(2+) is required as a cofactor.

Its subcellular location is the cytoplasm. It catalyses the reaction tRNA(Lys) + L-lysine + ATP = L-lysyl-tRNA(Lys) + AMP + diphosphate. The sequence is that of Lysine--tRNA ligase (lysS) from Saccharolobus solfataricus (strain ATCC 35092 / DSM 1617 / JCM 11322 / P2) (Sulfolobus solfataricus).